Reading from the N-terminus, the 638-residue chain is Ubiquitin-associated and SH3 domain-containing protein B (638 aa).

Phosphoserine is present on S9. At T12 the chain carries Phosphothreonine. Residues 23–65 (TVKHGSALDVLLSMGFPRARAQKALASTGGRSVQAACDWLFSH) enclose the UBA domain. Residues 243–308 (ANHETLQVIY…PENYITKADE (66 aa)) form the SH3 domain. The tract at residues 369-638 (GPQKRCLFVC…FNWRETLLQE (270 aa)) is protein tyrosine phosphatase. The active site involves R379. Catalysis depends on H380, which acts as the Tele-phosphohistidine intermediate. The active site involves H565.

Homodimer. Interacts with JAK2 (in vitro). Interacts with CBL. Part of a complex containing CBL and activated EGFR. Interacts with ubiquitin and with mono-ubiquitinated proteins. Interacts with ZAP70 (ubiquitinated form). As to expression, detected in splenic T-cells and B-cells, total spleen, skeletal muscle, heart, lung, kidney, thymus, brain and liver (at protein level). Highly expressed in brain. Detected in heart, spleen, lung, liver, kidney and testis.

It is found in the cytoplasm. The protein resides in the nucleus. The catalysed reaction is O-phospho-L-tyrosyl-[protein] + H2O = L-tyrosyl-[protein] + phosphate. In terms of biological role, interferes with CBL-mediated down-regulation and degradation of receptor-type tyrosine kinases. Promotes accumulation of activated target receptors, such as T-cell receptors and EGFR, on the cell surface. Exhibits tyrosine phosphatase activity toward several substrates including EGFR, FAK, SYK, and ZAP70. Down-regulates proteins that are dually modified by both protein tyrosine phosphorylation and ubiquitination. The protein is Ubiquitin-associated and SH3 domain-containing protein B (Ubash3b) of Mus musculus (Mouse).